Here is a 971-residue protein sequence, read N- to C-terminus: GEM-interacting protein (971 aa).

S19 is modified (phosphoserine). 3 disordered regions span residues 41–79 (AGDP…PEGP), 231–267 (LRAR…AQAK), and 383–476 (DTKK…IENG). Basic and acidic residues predominate over residues 44–56 (PVRREDLEPDKAD). Positions 59–69 (TVVTEENSEAS) are enriched in polar residues. Residues S75, S235, S238, S247, S436, and S440 each carry the phosphoserine modification. The 264-residue stretch at 85-348 (EELDLRLIRT…CCVPFEPGQR (264 aa)) folds into the F-BAR domain. Residues 458–471 (SSDDFEERDPDLGD) are compositionally biased toward acidic residues. The segment at 492-536 (THRLRRLRGPAKCRECEAFMVSGTECEECFLTCHKRCLETLLILC) adopts a Phorbol-ester/DAG-type zinc-finger fold. One can recognise a Rho-GAP domain in the interval 553 to 756 (LQLPRDFPEE…FLIVHYEQIF (204 aa)). T659 is modified (phosphothreonine). The disordered stretch occupies residues 799–865 (IALDSSPDPK…LGAQSRGHFS (67 aa)). The span at 805–817 (PDPKHHSALEKCP) shows a compositional bias: basic and acidic residues. S884, S908, and S924 each carry phosphoserine.

As to quaternary structure, interacts with GEM through its N-terminal.

Its function is as follows. Stimulates, in vitro and in vivo, the GTPase activity of RhoA. This is GEM-interacting protein (Gmip) from Mus musculus (Mouse).